The following is a 74-amino-acid chain: MSTPDFSTAENNQELANEVSCLKAMLTLMLQAMGQADAGRVMLKMEKQLALIEDETQAAVFSKTVKQIKQAYRQ.

This is an uncharacterized protein from Escherichia coli (strain K12).